A 652-amino-acid polypeptide reads, in one-letter code: Capsid protein (652 aa).

Positions 1-11 are enriched in polar residues; the sequence is MSSNDSAQTRN. The segment at 1–70 is disordered; that stretch reads MSSNDSAQTR…SSSDPPSASG (70 aa). The span at 34–47 shows a compositional bias: low complexity; the sequence is TNGPTTNSTSGSVG.

It localises to the virion. Functionally, the capsid protein self-assembles to form an icosahedral capsid with a T=2 symmetry made of 120 subunits. In Atkinsonella hypoxylon virus (isolate 2H) (AhV), this protein is Capsid protein.